We begin with the raw amino-acid sequence, 260 residues long: Voltage-dependent calcium channel gamma-6 subunit (260 aa).

The interval 14-33 (RRGAAGRRRAHGQGRSGLTP) is disordered. The span at 15-25 (RGAAGRRRAHG) shows a compositional bias: basic residues. The next 4 helical transmembrane spans lie at 43–63 (LLLA…EFWV), 143–163 (VIAV…IMVL), 169–189 (FLLR…LVSL), and 221–241 (LGCG…FLLL).

Belongs to the PMP-22/EMP/MP20 family. CACNG subfamily. Interacts with CACNA1C. Identified in a complex with the L-type calcium channel subunits CACNA1C, CACNA2D1 and either CACNB1 or CACNB2. As to expression, detected in heart left ventricle.

It is found in the cell membrane. Functionally, regulates the activity of L-type calcium channels that contain CACNA1C as pore-forming subunit. The sequence is that of Voltage-dependent calcium channel gamma-6 subunit (CACNG6) from Homo sapiens (Human).